A 344-amino-acid chain; its full sequence is Inositol 2-dehydrogenase/D-chiro-inositol 3-dehydrogenase (344 aa).

Belongs to the Gfo/Idh/MocA family. Homotetramer.

The enzyme catalyses myo-inositol + NAD(+) = scyllo-inosose + NADH + H(+). The catalysed reaction is 1D-chiro-inositol + NAD(+) = scyllo-inosine + NADH + H(+). It participates in polyol metabolism; myo-inositol degradation into acetyl-CoA; acetyl-CoA from myo-inositol: step 1/7. In terms of biological role, involved in the oxidation of myo-inositol (MI) and D-chiro-inositol (DCI) to 2-keto-myo-inositol (2KMI or 2-inosose) and 1-keto-D-chiro-inositol (1KDCI), respectively. Can also use D-glucose and D-xylose, and shows a trace of activity with D-ribose and D-fructose. This chain is Inositol 2-dehydrogenase/D-chiro-inositol 3-dehydrogenase (iolG), found in Bacillus subtilis (strain 168).